The primary structure comprises 276 residues: Bifunctional protein FolD 1 (276 aa).

NADP(+)-binding positions include 161–163 (GRG), Ser-186, and Thr-227.

The protein belongs to the tetrahydrofolate dehydrogenase/cyclohydrolase family. Homodimer.

It catalyses the reaction (6R)-5,10-methylene-5,6,7,8-tetrahydrofolate + NADP(+) = (6R)-5,10-methenyltetrahydrofolate + NADPH. The catalysed reaction is (6R)-5,10-methenyltetrahydrofolate + H2O = (6R)-10-formyltetrahydrofolate + H(+). The protein operates within one-carbon metabolism; tetrahydrofolate interconversion. Functionally, catalyzes the oxidation of 5,10-methylenetetrahydrofolate to 5,10-methenyltetrahydrofolate and then the hydrolysis of 5,10-methenyltetrahydrofolate to 10-formyltetrahydrofolate. The protein is Bifunctional protein FolD 1 of Frankia casuarinae (strain DSM 45818 / CECT 9043 / HFP020203 / CcI3).